A 333-amino-acid polypeptide reads, in one-letter code: Mycothiol acetyltransferase (333 aa).

N-acetyltransferase domains follow at residues 18–170 and 176–333; these read PTLS…LPEP and VTVR…AAAD. Glu-46 is a binding site for 1D-myo-inositol 2-(L-cysteinylamino)-2-deoxy-alpha-D-glucopyranoside. Residue 98–100 participates in acetyl-CoA binding; the sequence is IVV. 1D-myo-inositol 2-(L-cysteinylamino)-2-deoxy-alpha-D-glucopyranoside-binding residues include Glu-203, Lys-242, and Glu-261. Residues 265-267 and 272-278 contribute to the acetyl-CoA site; these read VGV and GGAGLGR. Tyr-299 contributes to the 1D-myo-inositol 2-(L-cysteinylamino)-2-deoxy-alpha-D-glucopyranoside binding site. 304–309 is a binding site for acetyl-CoA; sequence NERAVR.

This sequence belongs to the acetyltransferase family. MshD subfamily. As to quaternary structure, monomer.

The enzyme catalyses 1D-myo-inositol 2-(L-cysteinylamino)-2-deoxy-alpha-D-glucopyranoside + acetyl-CoA = mycothiol + CoA + H(+). Catalyzes the transfer of acetyl from acetyl-CoA to desacetylmycothiol (Cys-GlcN-Ins) to form mycothiol. This Frankia alni (strain DSM 45986 / CECT 9034 / ACN14a) protein is Mycothiol acetyltransferase.